The primary structure comprises 418 residues: Putative competence-damage inducible protein (418 aa).

Belongs to the CinA family.

The chain is Putative competence-damage inducible protein from Streptococcus pneumoniae serotype 19F (strain G54).